Reading from the N-terminus, the 152-residue chain is Lipoprotein signal peptidase (152 aa).

3 consecutive transmembrane segments (helical) span residues 5–25, 61–81, and 84–104; these read LFVL…FWIV, WFFV…LATH, and LNIW…GNFI. Active-site residues include Asp-114 and Asp-130. Residues 125 to 145 traverse the membrane as a helical segment; it reads IFNVADSYLTVGVILLVICLW.

It belongs to the peptidase A8 family.

The protein localises to the cell membrane. The enzyme catalyses Release of signal peptides from bacterial membrane prolipoproteins. Hydrolyzes -Xaa-Yaa-Zaa-|-(S,diacylglyceryl)Cys-, in which Xaa is hydrophobic (preferably Leu), and Yaa (Ala or Ser) and Zaa (Gly or Ala) have small, neutral side chains.. It participates in protein modification; lipoprotein biosynthesis (signal peptide cleavage). This protein specifically catalyzes the removal of signal peptides from prolipoproteins. This Streptococcus pyogenes serotype M6 (strain ATCC BAA-946 / MGAS10394) protein is Lipoprotein signal peptidase.